A 313-amino-acid polypeptide reads, in one-letter code: tRNA dimethylallyltransferase (313 aa).

An ATP-binding site is contributed by 9-16 (GPTAVGKT). 11–16 (TAVGKT) lines the substrate pocket. The tract at residues 34 to 37 (DSMQ) is interaction with substrate tRNA.

This sequence belongs to the IPP transferase family. Monomer. Requires Mg(2+) as cofactor.

It carries out the reaction adenosine(37) in tRNA + dimethylallyl diphosphate = N(6)-dimethylallyladenosine(37) in tRNA + diphosphate. Catalyzes the transfer of a dimethylallyl group onto the adenine at position 37 in tRNAs that read codons beginning with uridine, leading to the formation of N6-(dimethylallyl)adenosine (i(6)A). This Lachnoclostridium phytofermentans (strain ATCC 700394 / DSM 18823 / ISDg) (Clostridium phytofermentans) protein is tRNA dimethylallyltransferase.